A 104-amino-acid chain; its full sequence is 11 kDa late embryogenesis abundant protein (104 aa).

The segment covering 1-24 (MQSGKNAAASAKETAANVAASAKA) has biased composition (low complexity). The disordered stretch occupies residues 1–104 (MQSGKNAAAS…TGHRTGTGGI (104 aa)). Positions 25–74 (GMEKTKASLQEKGEKMTAHDPMQKEMAREKKEERKHEAEYEKQAAKEHNA) are enriched in basic and acidic residues. The span at 75–89 (AQKQTTGIGTGTHSY) shows a compositional bias: polar residues.

This sequence belongs to the LEA type 1 family. In terms of tissue distribution, maximally expressed in dry seeds. Also present in mid-maturation embryos.

Functionally, LEA proteins are late embryonic proteins abundant in higher plant seed embryos. They may play an essential role in seed survival and in controlling water exchanges during seed desiccation and imbibition. The sequence is that of 11 kDa late embryogenesis abundant protein from Helianthus annuus (Common sunflower).